Here is a 332-residue protein sequence, read N- to C-terminus: tRNA-dihydrouridine synthase B (332 aa).

FMN is bound by residues 16-18 (PMA) and Q70. Catalysis depends on C100, which acts as the Proton donor. FMN is bound by residues K139, 200-202 (NGD), and 224-225 (GR).

The protein belongs to the Dus family. DusB subfamily. The cofactor is FMN.

The enzyme catalyses a 5,6-dihydrouridine in tRNA + NAD(+) = a uridine in tRNA + NADH + H(+). It catalyses the reaction a 5,6-dihydrouridine in tRNA + NADP(+) = a uridine in tRNA + NADPH + H(+). Functionally, catalyzes the synthesis of 5,6-dihydrouridine (D), a modified base found in the D-loop of most tRNAs, via the reduction of the C5-C6 double bond in target uridines. This Pasteurella multocida (strain Pm70) protein is tRNA-dihydrouridine synthase B.